We begin with the raw amino-acid sequence, 270 residues long: Non-structural maintenance of chromosomes element 1 homolog (270 aa).

The RING-type; atypical zinc finger occupies 185–226 (CNVCRKVAIQSQLCENCGIPLHLQCAGKYFHGKANPTCPNCN). A disordered region spans residues 236 to 270 (LNQVSSQGPSHSQTETVRGRNQRSKNTSTASRTSR). 2 stretches are compositionally biased toward polar residues: residues 237–251 (NQVSSQGPSHSQTET) and 259–270 (SKNTSTASRTSR).

Belongs to the NSE1 family. As to quaternary structure, component of the SMC5-SMC6 complex.

The protein localises to the nucleus. The protein resides in the chromosome. It is found in the telomere. It carries out the reaction S-ubiquitinyl-[E2 ubiquitin-conjugating enzyme]-L-cysteine + [acceptor protein]-L-lysine = [E2 ubiquitin-conjugating enzyme]-L-cysteine + N(6)-ubiquitinyl-[acceptor protein]-L-lysine.. Its function is as follows. RING-type zinc finger-containing E3 ubiquitin ligase that assembles with melanoma antigen protein (MAGE) to catalyze the direct transfer of ubiquitin from E2 ubiquitin-conjugating enzyme to a specific substrate. Within MAGE-RING ubiquitin ligase complex, MAGE stimulates and specifies ubiquitin ligase activity likely through recruitment and/or stabilization of the E2 ubiquitin-conjugating enzyme at the E3:substrate complex. Involved in maintenance of genome integrity, DNA damage response and DNA repair. In Xenopus laevis (African clawed frog), this protein is Non-structural maintenance of chromosomes element 1 homolog (nsmce1).